A 77-amino-acid polypeptide reads, in one-letter code: Cysteine-rich protein 1 (77 aa).

Positions 2–63 constitute an LIM zinc-binding domain; sequence PKCPKCSKEV…HPCYAAMFGP (62 aa). Residues Lys-9 and Lys-22 each carry the N6-acetyllysine modification. Arg-68 carries the post-translational modification Omega-N-methylarginine.

Its function is as follows. Seems to have a role in zinc absorption and may function as an intracellular zinc transport protein. In Bos taurus (Bovine), this protein is Cysteine-rich protein 1 (CRIP1).